Consider the following 242-residue polypeptide: DNA repair protein RecO (242 aa).

This sequence belongs to the RecO family.

In terms of biological role, involved in DNA repair and RecF pathway recombination. This is DNA repair protein RecO from Bacteroides fragilis (strain ATCC 25285 / DSM 2151 / CCUG 4856 / JCM 11019 / LMG 10263 / NCTC 9343 / Onslow / VPI 2553 / EN-2).